The primary structure comprises 418 residues: 3-isopropylmalate dehydratase large subunit 1 (418 aa).

3 residues coordinate [4Fe-4S] cluster: Cys-298, Cys-358, and Cys-361.

The protein belongs to the aconitase/IPM isomerase family. LeuC type 2 subfamily. Heterodimer of LeuC and LeuD. [4Fe-4S] cluster is required as a cofactor.

The enzyme catalyses (2R,3S)-3-isopropylmalate = (2S)-2-isopropylmalate. It participates in amino-acid biosynthesis; L-leucine biosynthesis; L-leucine from 3-methyl-2-oxobutanoate: step 2/4. Its function is as follows. Catalyzes the isomerization between 2-isopropylmalate and 3-isopropylmalate, via the formation of 2-isopropylmaleate. This chain is 3-isopropylmalate dehydratase large subunit 1, found in Thermotoga maritima (strain ATCC 43589 / DSM 3109 / JCM 10099 / NBRC 100826 / MSB8).